Reading from the N-terminus, the 225-residue chain is Uridylate kinase (225 aa).

An ATP-binding site is contributed by 9–10 (GS). Glycine 44 provides a ligand contact to UMP. ATP is bound by residues glycine 45 and arginine 49. UMP is bound by residues aspartate 66 and 114-120 (THPGHTT). Residues threonine 140, asparagine 141, tyrosine 146, and aspartate 149 each contribute to the ATP site.

This sequence belongs to the UMP kinase family. Homohexamer.

The protein resides in the cytoplasm. It carries out the reaction UMP + ATP = UDP + ADP. Its pathway is pyrimidine metabolism; CTP biosynthesis via de novo pathway; UDP from UMP (UMPK route): step 1/1. Its activity is regulated as follows. Inhibited by UTP. Functionally, catalyzes the reversible phosphorylation of UMP to UDP. The polypeptide is Uridylate kinase (Thermococcus onnurineus (strain NA1)).